The following is a 218-amino-acid chain: Small ribosomal subunit protein uS3c (218 aa).

A KH type-2 domain is found at 47–118 (VQKHMRISSG…RLNIAIARVP (72 aa)).

The protein belongs to the universal ribosomal protein uS3 family. In terms of assembly, part of the 30S ribosomal subunit.

It localises to the plastid. Its subcellular location is the chloroplast. This is Small ribosomal subunit protein uS3c (rps3) from Nuphar advena (Common spatterdock).